Consider the following 230-residue polypeptide: Large ribosomal subunit protein uL1 (230 aa).

It belongs to the universal ribosomal protein uL1 family. In terms of assembly, part of the 50S ribosomal subunit.

Its function is as follows. Binds directly to 23S rRNA. The L1 stalk is quite mobile in the ribosome, and is involved in E site tRNA release. Functionally, protein L1 is also a translational repressor protein, it controls the translation of the L11 operon by binding to its mRNA. This chain is Large ribosomal subunit protein uL1, found in Lactobacillus gasseri (strain ATCC 33323 / DSM 20243 / BCRC 14619 / CIP 102991 / JCM 1131 / KCTC 3163 / NCIMB 11718 / NCTC 13722 / AM63).